Reading from the N-terminus, the 179-residue chain is Segregation and condensation protein B (179 aa).

This sequence belongs to the ScpB family. In terms of assembly, homodimer. Homodimerization may be required to stabilize the binding of ScpA to the Smc head domains. Component of a cohesin-like complex composed of ScpA, ScpB and the Smc homodimer, in which ScpA and ScpB bind to the head domain of Smc. The presence of the three proteins is required for the association of the complex with DNA.

It is found in the cytoplasm. Its function is as follows. Participates in chromosomal partition during cell division. May act via the formation of a condensin-like complex containing Smc and ScpA that pull DNA away from mid-cell into both cell halves. The protein is Segregation and condensation protein B of Clostridioides difficile (strain 630) (Peptoclostridium difficile).